The following is a 447-amino-acid chain: MRYLPHTDTDRKAMLDAIGVASIDDLFTDVPEAARLDGLIDLPTKQTELQVERALAAMSSRNVAASHAPFFVGAGAYKHHVPATVDHLIQRSEFLTAYTPYQPEISQGTLQTLFEFQTQVALLTGMDVANASMYDGSTACAEAVMMAARVTRRTKAVMAGSVHPHYVEASQTLAKYSDVSISVTDAAPADLDAVIAEIDDTTACVVIQTPDIFGRLHDLREVSRIAHEKGALVIAVFTEAVSLGLVEAPGHMGADIAVGEGQSIGVGLNFGGPYVGLFACKDDRRFIRQMPGRLAGETIDADGRRGYVLTLSTREQHIRRDKATSNICTNAGLCSLAWTIHMTLLGEKGLTQLARLNHETACELADALSAVPGVELVNETFFNEFTILLPKNADQVVNDLARFGVLGGVPASRLYPGRFENYLIIAATETNTPEDIAVFAKALAGVL.

It belongs to the GcvP family. N-terminal subunit subfamily. The glycine cleavage system is composed of four proteins: P, T, L and H. In this organism, the P 'protein' is a heterodimer of two subunits.

The enzyme catalyses N(6)-[(R)-lipoyl]-L-lysyl-[glycine-cleavage complex H protein] + glycine + H(+) = N(6)-[(R)-S(8)-aminomethyldihydrolipoyl]-L-lysyl-[glycine-cleavage complex H protein] + CO2. The glycine cleavage system catalyzes the degradation of glycine. The P protein binds the alpha-amino group of glycine through its pyridoxal phosphate cofactor; CO(2) is released and the remaining methylamine moiety is then transferred to the lipoamide cofactor of the H protein. The protein is Probable glycine dehydrogenase (decarboxylating) subunit 1 of Maricaulis maris (strain MCS10) (Caulobacter maris).